The chain runs to 465 residues: ATP synthase subunit beta (465 aa).

Residue 155–162 (GGAGVGKT) coordinates ATP.

This sequence belongs to the ATPase alpha/beta chains family. In terms of assembly, F-type ATPases have 2 components, CF(1) - the catalytic core - and CF(0) - the membrane proton channel. CF(1) has five subunits: alpha(3), beta(3), gamma(1), delta(1), epsilon(1). CF(0) has three main subunits: a(1), b(2) and c(9-12). The alpha and beta chains form an alternating ring which encloses part of the gamma chain. CF(1) is attached to CF(0) by a central stalk formed by the gamma and epsilon chains, while a peripheral stalk is formed by the delta and b chains.

The protein localises to the cell membrane. The catalysed reaction is ATP + H2O + 4 H(+)(in) = ADP + phosphate + 5 H(+)(out). Produces ATP from ADP in the presence of a proton gradient across the membrane. The catalytic sites are hosted primarily by the beta subunits. In Buchnera aphidicola subsp. Acyrthosiphon pisum (strain 5A), this protein is ATP synthase subunit beta.